The following is a 491-amino-acid chain: Leucine aminopeptidase 1 (491 aa).

The Zn(2+) site is built by Lys-252 and Asp-257. The active site involves Lys-264. Residues Asp-275, Asp-334, and Glu-336 each coordinate Zn(2+). Arg-338 is a catalytic residue.

This sequence belongs to the peptidase M17 family. Zn(2+) serves as cofactor. Expressed in the buccal cavity, pharynx, anterior gut and rectum.

The enzyme catalyses Release of an N-terminal amino acid, Xaa-|-Yaa-, in which Xaa is preferably Leu, but may be other amino acids including Pro although not Arg or Lys, and Yaa may be Pro. Amino acid amides and methyl esters are also readily hydrolyzed, but rates on arylamides are exceedingly low.. Functionally, probably acts as a digestive enzyme. The polypeptide is Leucine aminopeptidase 1 (lap-1) (Caenorhabditis elegans).